The primary structure comprises 263 residues: Copper homeostasis protein cutC homolog (263 aa).

This sequence belongs to the CutC family.

In terms of biological role, involved in copper homeostasis. The sequence is that of Copper homeostasis protein cutC homolog from Drosophila melanogaster (Fruit fly).